The primary structure comprises 194 residues: WASH complex subunit 3 (194 aa).

Met-1 is subject to N-acetylmethionine. Positions Ala-46–Ser-74 form a coiled coil. Disordered regions lie at residues Val-94–Asn-126 and Ser-158–Asp-194. Low complexity predominate over residues Ser-98–Gln-113. Residues Asp-114–Asn-126 are compositionally biased toward polar residues.

The protein belongs to the CCDC53 family. In terms of assembly, component of the WASH core complex also described as WASH regulatory complex (SHRC) composed of WASHC1, WASHC2, WASHC3, WASHC4 and WASHC5. The WASH core complex associates via WASHC2 with the F-actin-capping protein dimer (formed by CAPZA1, CAPZA2 or CAPZA3 and CAPZB) in a transient or substoichiometric manner which was initially described as WASH complex.

Its subcellular location is the early endosome. Its function is as follows. Acts as a component of the WASH core complex that functions as a nucleation-promoting factor (NPF) at the surface of endosomes, where it recruits and activates the Arp2/3 complex to induce actin polymerization, playing a key role in the fission of tubules that serve as transport intermediates during endosome sortingg. The polypeptide is WASH complex subunit 3 (Mus musculus (Mouse)).